Reading from the N-terminus, the 418-residue chain is Actin-related protein 3B (418 aa).

The protein belongs to the actin family. ARP3 subfamily. As to quaternary structure, interacts with the Arp2/3 complex composed of ARP2, ARP3, ARPC1B, ARPC1B/p41-ARC, ARPC2/p34-ARC, ARPC3/p21-ARC, ARPC4/p20-ARC and ARPC5/p16-ARC. Detected in fetal brain. Detected throughout the adult brain, in neurons from gray matter, but not in white matter. Detected in liver, skeletal muscle and pancreas. Detected in lung adenocarcinoma cells with low metastatic potential, but not in lung adenocarcinoma cells with high metastatic potential.

Its subcellular location is the cytoplasm. It localises to the cytoskeleton. The protein resides in the cell projection. Functionally, plays a role in the organization of the actin cytoskeleton. May function as ATP-binding component of the Arp2/3 complex which is involved in regulation of actin polymerization and together with an activating nucleation-promoting factor (NPF) mediates the formation of branched actin networks. May decrease the metastatic potential of tumors. This is Actin-related protein 3B (ACTR3B) from Homo sapiens (Human).